We begin with the raw amino-acid sequence, 442 residues long: Plasmalemma vesicle-associated protein (442 aa).

Residues 1 to 27 lie on the Cytoplasmic side of the membrane; that stretch reads MGLAMEHGGSYARAGGSSRGCWYYLRY. A helical; Signal-anchor for type II membrane protein transmembrane segment spans residues 28 to 48; the sequence is FFLFVSLIQFLIILGLVLFMV. At 49-442 the chain is on the extracellular side; that stretch reads YGNVHVSTES…AGIPVAPSSG (394 aa). Residues 57–77 adopt a coiled-coil conformation; sequence ESNLQATERRAEGLYSQLLGL. 4 N-linked (GlcNAc...) asparagine glycosylation sites follow: Asn83, Asn89, Asn113, and Asn151. Coiled-coil stretches lie at residues 202–225 and 280–387; these read KTRE…QALC and SSKV…SALD. 2 disordered regions span residues 301 to 328 and 394 to 418; these read NSDL…VEKE and SQPM…PASL. The span at 319 to 328 shows a compositional bias: basic and acidic residues; sequence QEAKQKVEKE.

In terms of assembly, homodimer. Expressed in lung, kidney, heart, aorta, placenta, muscle, pituitary gland, adrenals, mammary gland, bladder, lymph node, bone marrow, trachea, digestive tract, liver and tumor-associated endothelium.

It localises to the cell membrane. The protein resides in the membrane. Its subcellular location is the caveola. The protein localises to the cytoplasm. It is found in the perinuclear region. Endothelial cell-specific membrane protein involved in the formation of the diaphragms that bridge endothelial fenestrae. It is also required for the formation of stomata of caveolae and transendothelial channels. Functions in microvascular permeability, endothelial fenestrae contributing to the passage of water and solutes and regulating transcellular versus paracellular flow in different organs. Plays a specific role in embryonic development. This Homo sapiens (Human) protein is Plasmalemma vesicle-associated protein (PLVAP).